Reading from the N-terminus, the 355-residue chain is UDP-3-O-acylglucosamine N-acyltransferase (355 aa).

H258 (proton acceptor) is an active-site residue.

It belongs to the transferase hexapeptide repeat family. LpxD subfamily. Homotrimer.

It carries out the reaction a UDP-3-O-[(3R)-3-hydroxyacyl]-alpha-D-glucosamine + a (3R)-hydroxyacyl-[ACP] = a UDP-2-N,3-O-bis[(3R)-3-hydroxyacyl]-alpha-D-glucosamine + holo-[ACP] + H(+). It participates in bacterial outer membrane biogenesis; LPS lipid A biosynthesis. Functionally, catalyzes the N-acylation of UDP-3-O-acylglucosamine using 3-hydroxyacyl-ACP as the acyl donor. Is involved in the biosynthesis of lipid A, a phosphorylated glycolipid that anchors the lipopolysaccharide to the outer membrane of the cell. This Agrobacterium fabrum (strain C58 / ATCC 33970) (Agrobacterium tumefaciens (strain C58)) protein is UDP-3-O-acylglucosamine N-acyltransferase.